Here is a 138-residue protein sequence, read N- to C-terminus: MLQPKRRKYRKEQKGRNTGKATRGNAVSFGDFGLKAIGRGRLTARQIEAARRAMTRHIKRGGRIWIRIFPDKPISQKPAEVRMGNGKGNPEYYVAEIQPGKMLYEMDGVTEELAREAFRLAAAKLPLKTAFIVRQLGA.

Residues 1-13 are compositionally biased toward basic residues; it reads MLQPKRRKYRKEQ. Residues 1 to 24 are disordered; that stretch reads MLQPKRRKYRKEQKGRNTGKATRG.

Belongs to the universal ribosomal protein uL16 family. In terms of assembly, part of the 50S ribosomal subunit.

Its function is as follows. Binds 23S rRNA and is also seen to make contacts with the A and possibly P site tRNAs. This is Large ribosomal subunit protein uL16 from Burkholderia ambifaria (strain ATCC BAA-244 / DSM 16087 / CCUG 44356 / LMG 19182 / AMMD) (Burkholderia cepacia (strain AMMD)).